The following is a 275-amino-acid chain: uncharacterized protein (275 aa).

D45 contacts NADPH. Catalysis depends on proton donor residues Y50 and H111. Residues S139, Q162, L191, K196, S232, S233, and R237 each contribute to the NADPH site.

The protein belongs to the aldo/keto reductase family.

It localises to the cytoplasm. The protein resides in the nucleus. This is an uncharacterized protein from Schizosaccharomyces pombe (strain 972 / ATCC 24843) (Fission yeast).